The primary structure comprises 587 residues: Arginine--tRNA ligase (587 aa).

Positions 126 to 136 (ANPTGPLHVGH) match the 'HIGH' region motif.

The protein belongs to the class-I aminoacyl-tRNA synthetase family. In terms of assembly, monomer.

The protein resides in the cytoplasm. The enzyme catalyses tRNA(Arg) + L-arginine + ATP = L-arginyl-tRNA(Arg) + AMP + diphosphate. The protein is Arginine--tRNA ligase of Azoarcus sp. (strain BH72).